Reading from the N-terminus, the 431-residue chain is Serine/threonine-protein kinase Sgk1 (431 aa).

Residues 1–60 (MTVKTEAARDTLTYSRMRGMVAILIAFMKQRRMGLNDFIQKIANNSYACKHPEVQSILKI) are necessary for localization to the mitochondria. The disordered stretch occupies residues 64-92 (QEPELMNANPSPPPSPSQQINLGPSSNPH). Serine 74 is modified (phosphoserine). Position 78 is a phosphoserine; by MAPK7 (serine 78). Over residues 81 to 91 (QQINLGPSSNP) the composition is skewed to polar residues. In terms of domain architecture, Protein kinase spans 98 to 355 (FHFLKVIGKG…FMEIKNHVFF (258 aa)). ATP is bound by residues 104-112 (IGKGSFGKV) and lysine 127. The short motif at 131-141 (KKAILKKKEEK) is the Nuclear localization signal element. The Proton acceptor role is filled by aspartate 222. Threonine 256 carries the phosphothreonine; by PDPK1 modification. Residues 356-431 (SLINWEDLIN…SYAPPMDSFL (76 aa)) enclose the AGC-kinase C-terminal domain. The residue at position 369 (threonine 369) is a Phosphothreonine; by PKA. A phosphoserine mark is found at serine 397, serine 401, and serine 422.

This sequence belongs to the protein kinase superfamily. AGC Ser/Thr protein kinase family. In terms of assembly, homodimer; disulfide-linked. Forms a trimeric complex with FBXW7 and NOTCH1. Interacts with MAPK3/ERK1, MAPK1/ERK2, MAP2K1/MEK1, MAP2K2/MEK2, NEDD4, NEDD4L, MAPT/TAU, MAPK7, CREB1, SLC9A3R2/NHERF2 and KCNJ1/ROMK1. Associates with the mammalian target of rapamycin complex 2 (mTORC2) via an interaction with MAPKAP1/SIN1. Regulated by phosphorylation. Activated by phosphorylation on Ser-422 by mTORC2, transforming it into a substrate for PDPK1 which phosphorylates it on Thr-256. Phosphorylation on Ser-397 and Ser-401 are also essential for its activity. Phosphorylation on Ser-78 by MAPK7 is required for growth factor-induced cell cycle progression. Post-translationally, ubiquitinated by NEDD4L; which promotes proteasomal degradation. Ubiquitinated by SYVN1 at the endoplasmic reticulum; which promotes rapid proteasomal degradation and maintains a high turnover rate in resting cells.

Its subcellular location is the cytoplasm. The protein resides in the nucleus. It localises to the endoplasmic reticulum membrane. The protein localises to the cell membrane. It is found in the mitochondrion. It carries out the reaction L-seryl-[protein] + ATP = O-phospho-L-seryl-[protein] + ADP + H(+). The enzyme catalyses L-threonyl-[protein] + ATP = O-phospho-L-threonyl-[protein] + ADP + H(+). With respect to regulation, two specific sites, one in the kinase domain (Thr-256) and the other in the C-terminal regulatory region (Ser-422), need to be phosphorylated for its full activation. Phosphorylation at Ser-397 and Ser-401 are also essential for its activity. Activated by WNK1, WNK2, WNK3 and WNK4; which promote phosphorylation by mTORC2. Serine/threonine-protein kinase which is involved in the regulation of a wide variety of ion channels, membrane transporters, cellular enzymes, transcription factors, neuronal excitability, cell growth, proliferation, survival, migration and apoptosis. Plays an important role in cellular stress response. Contributes to regulation of renal Na(+) retention, renal K(+) elimination, salt appetite, gastric acid secretion, intestinal Na(+)/H(+) exchange and nutrient transport, insulin-dependent salt sensitivity of blood pressure, salt sensitivity of peripheral glucose uptake, cardiac repolarization and memory consolidation. Up-regulates Na(+) channels: SCNN1A/ENAC, SCN5A and ASIC1/ACCN2, K(+) channels: KCNJ1/ROMK1, KCNA1-5, KCNQ1-5 and KCNE1, epithelial Ca(2+) channels: TRPV5 and TRPV6, chloride channels: BSND, CLCN2 and CFTR, glutamate transporters: SLC1A3/EAAT1, SLC1A2 /EAAT2, SLC1A1/EAAT3, SLC1A6/EAAT4 and SLC1A7/EAAT5, amino acid transporters: SLC1A5/ASCT2, SLC38A1/SN1 and SLC6A19, creatine transporter: SLC6A8, Na(+)/dicarboxylate cotransporter: SLC13A2/NADC1, Na(+)-dependent phosphate cotransporter: SLC34A2/NAPI-2B, glutamate receptor: GRIK2/GLUR6. Up-regulates carriers: SLC9A3/NHE3, SLC12A1/NKCC2, SLC12A3/NCC, SLC5A3/SMIT, SLC2A1/GLUT1, SLC5A1/SGLT1 and SLC15A2/PEPT2. Regulates enzymes: GSK3A/B, PMM2 and Na(+)/K(+) ATPase, and transcription factors: CTNNB1 and nuclear factor NF-kappa-B. Stimulates sodium transport into epithelial cells by enhancing the stability and expression of SCNN1A/ENAC. This is achieved by phosphorylating the NEDD4L ubiquitin E3 ligase, promoting its interaction with 14-3-3 proteins, thereby preventing it from binding to SCNN1A/ENAC and targeting it for degradation. Regulates store-operated Ca(+2) entry (SOCE) by stimulating ORAI1 and STIM1. Regulates KCNJ1/ROMK1 directly via its phosphorylation or indirectly via increased interaction with SLC9A3R2/NHERF2. Phosphorylates MDM2 and activates MDM2-dependent ubiquitination of p53/TP53. Phosphorylates MAPT/TAU and mediates microtubule depolymerization and neurite formation in hippocampal neurons. Phosphorylates SLC2A4/GLUT4 and up-regulates its activity. Phosphorylates APBB1/FE65 and promotes its localization to the nucleus. Phosphorylates MAPK1/ERK2 and activates it by enhancing its interaction with MAP2K1/MEK1 and MAP2K2/MEK2. Phosphorylates FBXW7 and plays an inhibitory role in the NOTCH1 signaling. Phosphorylates FOXO1 resulting in its relocalization from the nucleus to the cytoplasm. Phosphorylates FOXO3, promoting its exit from the nucleus and interference with FOXO3-dependent transcription. Phosphorylates BRAF and MAP3K3/MEKK3 and inhibits their activity. Phosphorylates SLC9A3/NHE3 in response to dexamethasone, resulting in its activation and increased localization at the cell membrane. Phosphorylates CREB1. Necessary for vascular remodeling during angiogenesis. This chain is Serine/threonine-protein kinase Sgk1 (SGK1), found in Bos taurus (Bovine).